Reading from the N-terminus, the 511-residue chain is Endoglucanase B (511 aa).

Positions 1-29 are cleaved as a signal peptide; that stretch reads MNLLSGWVRPLMLGCGLLGAALSAGSIQA. Residues 30–130 enclose the CBM2 domain; that stretch reads AVCEYRVTNE…AVTGAICGGQ (101 aa). Residues Cys32 and Cys127 are joined by a disulfide bond. The disordered stretch occupies residues 137 to 173; the sequence is SVASSSSSSSVVSSTPRSSSSSVSSSVPGTSSSSSSS. The region spanning 180-209 is the CBM10 domain; it reads ACNWYGTLTPLCNNTSNGWGYEDGRSCVAR. Cystine bridges form between Cys181/Cys212 and Cys191/Cys206. The Nucleophile role is filled by Asp276. Asp393 (proton donor) is an active-site residue.

It belongs to the glycosyl hydrolase 45 (cellulase K) family.

It localises to the periplasm. It carries out the reaction Endohydrolysis of (1-&gt;4)-beta-D-glucosidic linkages in cellulose, lichenin and cereal beta-D-glucans.. Functionally, this enzyme catalyzes the endohydrolysis of 1,4-beta-glucosidic linkages in cellulose, lichenin and cereal beta-D-glucans. EGB is most active against barley beta-glucan, but showed significant activity against amorphous and crystalline cellulose. The protein is Endoglucanase B (celB) of Cellvibrio japonicus (strain Ueda107) (Pseudomonas fluorescens subsp. cellulosa).